We begin with the raw amino-acid sequence, 303 residues long: Bidirectional sugar transporter SWEET14 (303 aa).

Over 1–9 (MAGMSLQHP) the chain is Extracellular. The chain crosses the membrane as a helical span at residues 10-30 (WAFAFGLLGNIISFMTYLAPL). Residues 13 to 98 (AFGLLGNIIS…AVYLVYAPKK (86 aa)) form the MtN3/slv 1 domain. Residues 31 to 44 (PTFYRIYKSKSTQG) are Cytoplasmic-facing. A helical membrane pass occupies residues 45-65 (FQSVPYVVALFSAMLWIYYAL). Residues 66–72 (LKSDECL) are Extracellular-facing. A helical transmembrane segment spans residues 73–93 (LITINSAGCVIETIYIAVYLV). The Cytoplasmic segment spans residues 94–105 (YAPKKAKMFTAK). Residues 106–126 (LLLLVNVGVFGLILLLTLLLS) traverse the membrane as a helical segment. At 127 to 133 (AGDRRIV) the chain is on the extracellular side. Residues 134 to 154 (VLGWVCVGFSVSVFVAPLSII) form a helical membrane-spanning segment. A MtN3/slv 2 domain is found at 134-217 (VLGWVCVGFS…MGLYAMYRNS (84 aa)). Topologically, residues 155–167 (RLVVRTKSVEFMP) are cytoplasmic. A helical transmembrane segment spans residues 168–188 (FSLSFSLTISAVVWFLYGLLI). Residues 189 to 192 (KDKY) lie on the Extracellular side of the membrane. A helical membrane pass occupies residues 193–213 (VALPNVLGFSFGVIQMGLYAM). At 214–303 (YRNSTPKAVL…AGAGEKKVAA (90 aa)) the chain is on the cytoplasmic side. The segment at 266-290 (HPVDVESPPAEAPPEEDDKAAAATA) is disordered.

Belongs to the SWEET sugar transporter family. Forms homooligomers and/or heterooligomers.

Its subcellular location is the cell membrane. Mediates both low-affinity uptake and efflux of sugar across the plasma membrane. Its function is as follows. Confers blight susceptibility. Confers TAL effector-mediated susceptibility to Xanthomonas oryzae pv. oryzae. The chain is Bidirectional sugar transporter SWEET14 (SWEET14) from Oryza sativa subsp. japonica (Rice).